Reading from the N-terminus, the 157-residue chain is Protein Smg homolog (157 aa).

The protein belongs to the Smg family.

This is Protein Smg homolog from Aeromonas hydrophila subsp. hydrophila (strain ATCC 7966 / DSM 30187 / BCRC 13018 / CCUG 14551 / JCM 1027 / KCTC 2358 / NCIMB 9240 / NCTC 8049).